The primary structure comprises 183 residues: Nucleoside triphosphate pyrophosphatase (183 aa).

The Proton acceptor role is filled by aspartate 71.

The protein belongs to the Maf family. It depends on a divalent metal cation as a cofactor.

The protein resides in the cytoplasm. It carries out the reaction a ribonucleoside 5'-triphosphate + H2O = a ribonucleoside 5'-phosphate + diphosphate + H(+). The catalysed reaction is a 2'-deoxyribonucleoside 5'-triphosphate + H2O = a 2'-deoxyribonucleoside 5'-phosphate + diphosphate + H(+). Its function is as follows. Nucleoside triphosphate pyrophosphatase. May have a dual role in cell division arrest and in preventing the incorporation of modified nucleotides into cellular nucleic acids. This Campylobacter jejuni subsp. jejuni serotype O:2 (strain ATCC 700819 / NCTC 11168) protein is Nucleoside triphosphate pyrophosphatase.